Reading from the N-terminus, the 228-residue chain is Ankyrin repeat domain-containing protein 46 (228 aa).

4 ANK repeats span residues 11–40 (QTNVPLLQACIDGDFNYSKRLLESGFDPNI), 44–73 (RGRTGLHLAAARGNVDICQLLHKFGADLLA), 77–103 (QGNTALHLCGHVDTIQFLVSNGLKIDI), and 107–138 (QGATPLVLAKRRGVNKDVIRLLEFLEEQEVKG). The helical transmembrane segment at 195-215 (VLLLIFVIALLSLGIAYYVSG) threads the bilayer.

The protein resides in the membrane. The polypeptide is Ankyrin repeat domain-containing protein 46 (ANKRD46) (Pongo abelii (Sumatran orangutan)).